Here is a 286-residue protein sequence, read N- to C-terminus: Beta-lactamase SHV-5 (286 aa).

The signal sequence occupies residues 1 to 21; sequence MRYIRLCIISLLATLPLAVHA. Ser-66 serves as the catalytic Acyl-ester intermediate. A disulfide bond links Cys-73 and Cys-119. Glu-164 serves as the catalytic Proton acceptor. 230–232 serves as a coordination point for substrate; sequence KTG.

This sequence belongs to the class-A beta-lactamase family.

It catalyses the reaction a beta-lactam + H2O = a substituted beta-amino acid. Functionally, SHV enzymes hydrolyze broad spectrum cephalosporins notably cefotaxime and ceftazidime. SHV-5 causes particularly high levels of resistance to aztreonam and ceftazidime. In Klebsiella pneumoniae, this protein is Beta-lactamase SHV-5 (bla).